The primary structure comprises 73 residues: Large ribosomal subunit protein bL31 (73 aa).

It belongs to the bacterial ribosomal protein bL31 family. Type A subfamily. As to quaternary structure, part of the 50S ribosomal subunit.

In terms of biological role, binds the 23S rRNA. This is Large ribosomal subunit protein bL31 from Paracoccus denitrificans (strain Pd 1222).